Here is a 210-residue protein sequence, read N- to C-terminus: N-(5'-phosphoribosyl)anthranilate isomerase (210 aa).

The protein belongs to the TrpF family.

The catalysed reaction is N-(5-phospho-beta-D-ribosyl)anthranilate = 1-(2-carboxyphenylamino)-1-deoxy-D-ribulose 5-phosphate. The protein operates within amino-acid biosynthesis; L-tryptophan biosynthesis; L-tryptophan from chorismate: step 3/5. In Pseudomonas fluorescens (strain SBW25), this protein is N-(5'-phosphoribosyl)anthranilate isomerase.